The sequence spans 270 residues: MHLDSLVAPLVEQASAILDAATALFLVGHRADSAVRKKGNDFATEVDLAIERQVVAALVAATGIEVHGEEFGGPAVDSRWVWVLDPIDGTINYAAGSPLAAILLGLLHDGVPVAGLTWMPFTDPRYTAVAGGPLIKNGVPQPPLADAELANVLVGVGTFSADSRGQFPGRYRLAVLEKLSRVSSRLRMHGSTGIDLVFVADGILGGAISFGGHVWDHAAGVALVRAAGGVVTDLAGQPWTPASRSALAGPPRVHAQILEILGSIGEPEDY.

Mg(2+)-binding residues include Glu69, Asp85, Ile87, and Asp88. Glu69 serves as a coordination point for substrate. Residues 87 to 90, Arg187, and Asp216 contribute to the substrate site; that span reads IDGT. Mg(2+) is bound at residue Asp216.

This sequence belongs to the inositol monophosphatase superfamily. Mg(2+) is required as a cofactor.

It catalyses the reaction a myo-inositol phosphate + H2O = myo-inositol + phosphate. Its pathway is polyol metabolism; myo-inositol biosynthesis; myo-inositol from D-glucose 6-phosphate: step 2/2. Its function is as follows. Catalyzes the dephosphorylation of inositol 1-phosphate (I-1-P) to yield free myo-inositol, a key metabolite in mycobacteria. This Mycobacterium tuberculosis (strain ATCC 25618 / H37Rv) protein is Probable inositol 1-monophosphatase ImpA (impA).